A 362-amino-acid chain; its full sequence is Peptide chain release factor 1 (362 aa).

At Gln237 the chain carries N5-methylglutamine.

The protein belongs to the prokaryotic/mitochondrial release factor family. Post-translationally, methylated by PrmC. Methylation increases the termination efficiency of RF1.

The protein localises to the cytoplasm. Functionally, peptide chain release factor 1 directs the termination of translation in response to the peptide chain termination codons UAG and UAA. This Aeromonas salmonicida (strain A449) protein is Peptide chain release factor 1.